A 426-amino-acid polypeptide reads, in one-letter code: Serine hydroxymethyltransferase (426 aa).

(6S)-5,6,7,8-tetrahydrofolate-binding positions include L118 and 122–124; that span reads GHL. Position 227 is an N6-(pyridoxal phosphate)lysine (K227). The disordered stretch occupies residues 342 to 368; it reads NTIPNDPKPPTQASGIRLGTPAMTTRG.

The protein belongs to the SHMT family. Homodimer. The cofactor is pyridoxal 5'-phosphate.

It localises to the cytoplasm. The enzyme catalyses (6R)-5,10-methylene-5,6,7,8-tetrahydrofolate + glycine + H2O = (6S)-5,6,7,8-tetrahydrofolate + L-serine. It functions in the pathway one-carbon metabolism; tetrahydrofolate interconversion. The protein operates within amino-acid biosynthesis; glycine biosynthesis; glycine from L-serine: step 1/1. Its function is as follows. Catalyzes the reversible interconversion of serine and glycine with tetrahydrofolate (THF) serving as the one-carbon carrier. This reaction serves as the major source of one-carbon groups required for the biosynthesis of purines, thymidylate, methionine, and other important biomolecules. Also exhibits THF-independent aldolase activity toward beta-hydroxyamino acids, producing glycine and aldehydes, via a retro-aldol mechanism. In Thermomicrobium roseum (strain ATCC 27502 / DSM 5159 / P-2), this protein is Serine hydroxymethyltransferase.